The sequence spans 202 residues: Imidazoleglycerol-phosphate dehydratase (202 aa).

Belongs to the imidazoleglycerol-phosphate dehydratase family.

The protein localises to the cytoplasm. It carries out the reaction D-erythro-1-(imidazol-4-yl)glycerol 3-phosphate = 3-(imidazol-4-yl)-2-oxopropyl phosphate + H2O. It participates in amino-acid biosynthesis; L-histidine biosynthesis; L-histidine from 5-phospho-alpha-D-ribose 1-diphosphate: step 6/9. This is Imidazoleglycerol-phosphate dehydratase from Corynebacterium efficiens (strain DSM 44549 / YS-314 / AJ 12310 / JCM 11189 / NBRC 100395).